Reading from the N-terminus, the 443-residue chain is Phosphoglucosamine mutase (443 aa).

Residue Ser-102 is the Phosphoserine intermediate of the active site. Positions 102, 241, 243, and 245 each coordinate Mg(2+). Residue Ser-102 is modified to Phosphoserine.

The protein belongs to the phosphohexose mutase family. Mg(2+) serves as cofactor. Post-translationally, activated by phosphorylation.

The enzyme catalyses alpha-D-glucosamine 1-phosphate = D-glucosamine 6-phosphate. In terms of biological role, catalyzes the conversion of glucosamine-6-phosphate to glucosamine-1-phosphate. This chain is Phosphoglucosamine mutase, found in Acinetobacter baylyi (strain ATCC 33305 / BD413 / ADP1).